The chain runs to 182 residues: Peptidyl-tRNA hydrolase (182 aa).

Tyr-14 contributes to the tRNA binding site. Residue His-19 is the Proton acceptor of the active site. 3 residues coordinate tRNA: Tyr-65, Asn-67, and Asn-113.

The protein belongs to the PTH family. Monomer.

The protein localises to the cytoplasm. It catalyses the reaction an N-acyl-L-alpha-aminoacyl-tRNA + H2O = an N-acyl-L-amino acid + a tRNA + H(+). Functionally, hydrolyzes ribosome-free peptidyl-tRNAs (with 1 or more amino acids incorporated), which drop off the ribosome during protein synthesis, or as a result of ribosome stalling. Its function is as follows. Catalyzes the release of premature peptidyl moieties from peptidyl-tRNA molecules trapped in stalled 50S ribosomal subunits, and thus maintains levels of free tRNAs and 50S ribosomes. The chain is Peptidyl-tRNA hydrolase from Rickettsia peacockii (strain Rustic).